The primary structure comprises 560 residues: Membrane-bound O-acyltransferase GUP1 (560 aa).

Topologically, residues 1–43 (MSLISILSPLITSEGLDSRIKPSPKKDASTTTKPSLWKTTEFK) are extracellular. A helical membrane pass occupies residues 44–64 (FYYIAFLVVVPLMFYAGLQAS). At 65–101 (SPENPNYARYERLLSQGWLFGRKVDNSDSQYRFFRDN) the chain is on the cytoplasmic side. The chain crosses the membrane as a helical span at residues 102 to 122 (FALLSVLMLVHTSIKRIVLYS). Residues 123-131 (TNITKLRFD) lie on the Extracellular side of the membrane. The chain crosses the membrane as a helical span at residues 132–152 (LIFGLIFLVAAHGVNSIRILA). The Cytoplasmic segment spans residues 153 to 165 (HMLILYAIAHVLK). A helical transmembrane segment spans residues 166–185 (NFRRIATISIWIYGISTLFI). Topologically, residues 186-276 (NDNFRAYPFG…AAHPIQDYSL (91 aa)) are extracellular. Residues 277–297 (MNYIAYVTYTPLFIAGPIITF) form a helical membrane-spanning segment. Topologically, residues 298 to 322 (NDYVYQSKHTLPSINFKFIFYYAVR) are cytoplasmic. The helical transmembrane segment at 323–343 (FVIALLSMEFILHFLHVVAIS) threads the bilayer. Over 344 to 352 (KTKAWENDT) the chain is Extracellular. The helical transmembrane segment at 353-373 (PFQISMIGLFNLNIIWLKLLI) threads the bilayer. The Cytoplasmic segment spans residues 374-432 (PWRLFRLWALLDGIDTPENMIRCVDNNYSSLAFWRAWHRSYNKWVVRYIYIPLGGSKNR). A run of 2 helical transmembrane segments spans residues 433–453 (VLTS…ELKL) and 454–474 (LLWG…TQIF). His447 is a catalytic residue. At 475 to 485 (SHYTDAVWYRH) the chain is on the cytoplasmic side. A helical transmembrane segment spans residues 486-506 (VCAVGAVFNIWVMMIANLFGF). Residues 507 to 526 (CLGSDGTKKLLSDMFCTVSG) lie on the Extracellular side of the membrane. Residues 527-547 (FKFVILASVSLFIAVQIMFEI) form a helical membrane-spanning segment. Residues 548-560 (REEEKRHGIYLKC) are Cytoplasmic-facing.

It belongs to the membrane-bound acyltransferase family. In terms of assembly, interacts with mitochondrial outer membrane voltage-dependent anion channel (VDAC) POR1.

It is found in the cell membrane. The protein localises to the endoplasmic reticulum membrane. It localises to the mitochondrion membrane. Membrane-bound O-acyltransferase involved in the remodeling of glycosylphosphatidylinositol (GPI) anchors. Acts only on GPI-anchored proteins, but not on free GPI lipids. Acts as an acyltransferase for GPI anchors that adds C26 fatty acids to the sn2 position of lyso-PI-containing GPI anchors. PER1 first deacylates, GUP1 subsequently reacylates the anchor lipid, thus replacing a shorter fatty acid (C16:0 or C18:0) by C26:0. Also involved in lipid metabolism, having profound effects on sphingolipid-sterol-ordered domains integrity and assembly. Together with GUP2, has an influence on the chemical composition of the yeast extracellular matrix (yECM) in yeast multicellular aggregates, such as biofilms and colonies. Involved in cell integrity and apoptosis. This is Membrane-bound O-acyltransferase GUP1 (GUP1) from Saccharomyces cerevisiae (strain ATCC 204508 / S288c) (Baker's yeast).